A 224-amino-acid polypeptide reads, in one-letter code: Transcriptional regulatory protein DltR (224 aa).

Residues 2 to 116 (RLLVVEDEKS…ELLARIRLRT (115 aa)) enclose the Response regulatory domain. At D51 the chain carries 4-aspartylphosphate. Residues 124–222 (ANQLRLGNIR…TKGFGYSLEE (99 aa)) constitute a DNA-binding region (ompR/PhoB-type).

In terms of processing, phosphorylated by DltS.

It localises to the cytoplasm. Functionally, member of the two-component regulatory system DltS/DltR. Regulates the expression of the dlt operon. The protein is Transcriptional regulatory protein DltR (dltR) of Streptococcus agalactiae serotype III (strain NEM316).